Here is a 309-residue protein sequence, read N- to C-terminus: L-aminoadipate-semialdehyde dehydrogenase-phosphopantetheinyl transferase (309 aa).

Residues Arg-47, 86–91 (RTAKGK), and 108–111 (NISH) contribute to the CoA site. 2 residues coordinate Mg(2+): Asp-129 and Glu-181. 181-185 (ESFIK) contributes to the CoA binding site. At Ser-258 the chain carries Phosphoserine.

The protein belongs to the P-Pant transferase superfamily. AcpS family. In terms of assembly, monomer. The cofactor is Mg(2+).

The protein localises to the cytoplasm. The protein resides in the cytosol. It catalyses the reaction apo-[ACP] + CoA = holo-[ACP] + adenosine 3',5'-bisphosphate + H(+). It carries out the reaction apo-[ACP] + acetyl-CoA = acetyl-[ACP] + adenosine 3',5'-bisphosphate + H(+). Functionally, catalyzes the post-translational modification of target proteins by phosphopantetheine. Can transfer the 4'-phosphopantetheine moiety from coenzyme A, regardless of whether the CoA is presented in the free thiol form or as an acetyl thioester, to a serine residue of a broad range of acceptors including the acyl carrier domain of FASN. This is L-aminoadipate-semialdehyde dehydrogenase-phosphopantetheinyl transferase (AASDHPPT) from Pongo abelii (Sumatran orangutan).